Consider the following 1028-residue polypeptide: Ubiquitin conjugation factor E4 A (1028 aa).

A disordered region spans residues 33–57 (KEQLKQQSDELPASPDDSDNSVSES). At Lys386 the chain carries N6-acetyllysine. The U-box domain occupies 949 to 1023 (DACDEFLDPI…QRWLAERKQQ (75 aa)).

It belongs to the ubiquitin conjugation factor E4 family. As to expression, expressed in liver, heart, brain, kidney and testis.

The protein localises to the cytoplasm. The catalysed reaction is S-ubiquitinyl-[E2 ubiquitin-conjugating enzyme]-L-cysteine + [acceptor protein]-L-lysine = [E2 ubiquitin-conjugating enzyme]-L-cysteine + N(6)-ubiquitinyl-[acceptor protein]-L-lysine.. It functions in the pathway protein modification; protein ubiquitination. Functionally, ubiquitin-protein ligase that probably functions as an E3 ligase in conjunction with specific E1 and E2 ligases. May also function as an E4 ligase mediating the assembly of polyubiquitin chains on substrates ubiquitinated by another E3 ubiquitin ligase. Mediates 'Lys-48'-linked polyubiquitination of substrates. In Mus musculus (Mouse), this protein is Ubiquitin conjugation factor E4 A.